A 142-amino-acid chain; its full sequence is Large ribosomal subunit protein uL13 (142 aa).

Belongs to the universal ribosomal protein uL13 family. In terms of assembly, part of the 50S ribosomal subunit.

This protein is one of the early assembly proteins of the 50S ribosomal subunit, although it is not seen to bind rRNA by itself. It is important during the early stages of 50S assembly. This Francisella tularensis subsp. holarctica (strain FTNF002-00 / FTA) protein is Large ribosomal subunit protein uL13.